A 600-amino-acid chain; its full sequence is ATP-dependent lipid A-core flippase (600 aa).

The next 4 helical transmembrane spans lie at 26 to 46 (VGIFLLSIIGFVIFASTQPML), 82 to 102 (LLIVLIAAWQGLGSFLGNYFL), 167 to 187 (VFLFIYLLMMNWKLTLVMLAI), and 266 to 286 (PMLQLVIYSAMAVLMFLVLFL). One can recognise an ABC transmembrane type-1 domain in the interval 30–321 (LLSIIGFVIF…LSEVSSTIQK (292 aa)). An ABC transporter domain is found at 353-589 (LEVKNLSFFY…NGYYARLHAM (237 aa)). Residue 387-394 (GRSGSGKS) coordinates ATP.

It belongs to the ABC transporter superfamily. Lipid exporter (TC 3.A.1.106) family. Homodimer.

The protein resides in the cell inner membrane. The enzyme catalyses ATP + H2O + lipid A-core oligosaccharideSide 1 = ADP + phosphate + lipid A-core oligosaccharideSide 2.. Involved in lipopolysaccharide (LPS) biosynthesis. Translocates lipid A-core from the inner to the outer leaflet of the inner membrane. Transmembrane domains (TMD) form a pore in the inner membrane and the ATP-binding domain (NBD) is responsible for energy generation. In Pseudomonas savastanoi pv. phaseolicola (strain 1448A / Race 6) (Pseudomonas syringae pv. phaseolicola (strain 1448A / Race 6)), this protein is ATP-dependent lipid A-core flippase.